Here is a 256-residue protein sequence, read N- to C-terminus: tRNA pseudouridine synthase A (256 aa).

The active-site Nucleophile is the Asp49. Residue Tyr104 participates in substrate binding.

It belongs to the tRNA pseudouridine synthase TruA family.

The enzyme catalyses uridine(38/39/40) in tRNA = pseudouridine(38/39/40) in tRNA. Its function is as follows. Formation of pseudouridine at positions 38, 39 and 40 in the anticodon stem and loop of transfer RNAs. This is tRNA pseudouridine synthase A from Methanopyrus kandleri (strain AV19 / DSM 6324 / JCM 9639 / NBRC 100938).